Here is a 222-residue protein sequence, read N- to C-terminus: tRNA (guanine-N(1)-)-methyltransferase (222 aa).

S-adenosyl-L-methionine contacts are provided by residues Gly112 and 132-137 (IGDYVL).

Belongs to the RNA methyltransferase TrmD family. As to quaternary structure, homodimer.

It is found in the cytoplasm. It catalyses the reaction guanosine(37) in tRNA + S-adenosyl-L-methionine = N(1)-methylguanosine(37) in tRNA + S-adenosyl-L-homocysteine + H(+). Functionally, specifically methylates guanosine-37 in various tRNAs. This chain is tRNA (guanine-N(1)-)-methyltransferase, found in Azobacteroides pseudotrichonymphae genomovar. CFP2.